Here is an 846-residue protein sequence, read N- to C-terminus: Aminopeptidase N (846 aa).

Substrate contacts are provided by residues glutamate 120 and glycine 252–asparagine 256. Residue histidine 288 coordinates Zn(2+). The active-site Proton acceptor is glutamate 289. Zn(2+) contacts are provided by histidine 292 and glutamate 311.

This sequence belongs to the peptidase M1 family. In terms of assembly, monomer. The cofactor is Zn(2+).

Its subcellular location is the cytoplasm. It carries out the reaction Release of an N-terminal amino acid, Xaa-|-Yaa- from a peptide, amide or arylamide. Xaa is preferably Ala, but may be most amino acids including Pro (slow action). When a terminal hydrophobic residue is followed by a prolyl residue, the two may be released as an intact Xaa-Pro dipeptide.. Functionally, aminopeptidase with broad substrate specificity to several peptides. It has more affinity for oligopeptides than for dipeptides. It plays an essential role in the metabolism, it may be involved in nitrogen supply or protein turnover. This Lactococcus lactis subsp. cremoris (Streptococcus cremoris) protein is Aminopeptidase N (pepN).